The following is a 218-amino-acid chain: Esterase FPY3 (218 aa).

Residues Ser-95, Asp-163, and His-190 each act as charge relay system in the active site.

It belongs to the LovG family.

It functions in the pathway secondary metabolite biosynthesis. Its function is as follows. Esterase; part of the gene cluster that mediates the biosynthesis of the gamma-pyrones fusapyrone (FPY) and deoxyfusapyrone (dFPY). FPY is an undecaketide and thus likely synthesized by the polyketide synthase FPY1 from acetyl-CoA functioning as starter unit and the addition of 10 malonyl-CoA extender units by successive Claisen-condensations. Next to this, FPY shares some rare features: C-glycosylated 4-deoxyglucose at C-3, a gem-dimethyl group at C-13, and an alpha-beta to beta-gamma double bond shift at C-20. During FPY biosynthesis mono-C-methyl groups are transferred to the tetra-, penta-, hexa- and heptaketide, while two C-methyl groups are transferred to the nonaketide, suggesting that the CMet domain is programmed to selectively catalyze two successive C-alpha-methylation reactions of the nonaketide, while other alpha-carbons are non- or mono-methylated only. While the origin of the 4'-deoxyglucose moiety remains opaque, its transfer to C-3 is most likely mediated by the C-glycosyltransferase FPY2. Next to this, the hydroxyl group present at C-33 and discriminating between FPY and dFPY, is likely to be installed by the cytochrome P450 monooxygenase FPY7. No putative function can be predicted for the remaining genes FPY3-FPY6. This chain is Esterase FPY3, found in Fusarium mangiferae (Mango malformation disease fungus).